Reading from the N-terminus, the 342-residue chain is Zinc transporter ZIP11 (342 aa).

Helical transmembrane passes span 12-32 (LLGT…VFIF), 44-64 (LGFA…APAV), 72-92 (GFGA…AAFV), 194-214 (IALL…AVGV), 263-285 (FWYG…FAVV), 290-307 (ILPY…YVVM), and 322-342 (LASW…VGLG).

It belongs to the ZIP transporter (TC 2.A.5) family. As to expression, highly expressed in the testes and portions of the digestive system including the stomach, ileum and cecum. In contrast, expressed at very low levels in liver, duodenum, jejunum, and colon.

The protein resides in the cell membrane. It is found in the nucleus. The protein localises to the cytoplasm. It localises to the golgi apparatus. The enzyme catalyses Zn(2+)(in) = Zn(2+)(out). It carries out the reaction Cu(2+)(in) = Cu(2+)(out). Functionally, zinc importer that regulates cytosolic zinc concentration either via zinc influx from the extracellular compartment or efflux from intracellular organelles such as Golgi apparatus. May transport copper ions as well. The transport mechanism remains to be elucidated. This Mus musculus (Mouse) protein is Zinc transporter ZIP11 (Slc39a11).